We begin with the raw amino-acid sequence, 355 residues long: Aromatic amino acid aminotransferase (355 aa).

Residue Lys217 is modified to N6-(pyridoxal phosphate)lysine.

The protein belongs to the class-II pyridoxal-phosphate-dependent aminotransferase family. Homodimer. The cofactor is pyridoxal 5'-phosphate.

It carries out the reaction an aromatic L-alpha-amino acid + 2-oxoglutarate = an aromatic oxo-acid + L-glutamate. Aminotransferase that catalyzes the conversion of aromatic amino acids and 2-oxoglutarate into corresponding aromatic oxo acids and L-glutamate. The polypeptide is Aromatic amino acid aminotransferase (Mycobacterium avium (strain 104)).